Here is a 953-residue protein sequence, read N- to C-terminus: E3 ubiquitin-protein ligase ZNF598 (953 aa).

Over residues 25-39 (KPSKSTRIKPTKPHH) the composition is skewed to basic residues. The segment at 25–47 (KPSKSTRIKPTKPHHTPSNSMES) is disordered. The RING-type zinc-finger motif lies at 57 to 97 (CVLCCQDIDLFAVGKCDHPVCYRCSTKMRVLCEQKYCAVCR). A C2H2-type zinc finger spans residues 215–238 (PLCKFCDDRYLDNDELLKHLRRDH). 2 disordered regions span residues 299 to 779 (SKNR…EDSS) and 884 to 911 (EKQQQGSKPKKSKKKAWQTGTSSSSSLD). Residues 371-380 (AAAMRASMAS) are compositionally biased toward low complexity. Basic and acidic residues predominate over residues 381-409 (HQEERSHAQERSMLKPRREEKLEPDETRN). Polar residues-rich tracts occupy residues 410-431 (NRSTARPTNDTQARSMKSNGSL) and 467-483 (LSGSVVSSPMTPAYTNQ). The residue at position 489 (Ser-489) is a Phosphoserine. 2 stretches are compositionally biased toward low complexity: residues 508-518 (QSSAASAWSQA) and 536-553 (MTPMSSSSILSSTDPLPS). Composition is skewed to polar residues over residues 555–564 (SVPQPLTASS) and 641–650 (LGSPSHTPET). Over residues 655–666 (AHKENVPEKKPP) the composition is skewed to basic and acidic residues. The segment covering 695–711 (SCTSFPENITSSKQPVT) has biased composition (polar residues). A compositionally biased stretch (pro residues) spans 747–765 (LPPPPPPGLGPAVSKPPPG). A compositionally biased stretch (polar residues) spans 770–779 (PLNSNVEDSS).

It belongs to the ZNF598/HEL2 family.

It is found in the cytoplasm. The protein resides in the cytosol. It catalyses the reaction S-ubiquitinyl-[E2 ubiquitin-conjugating enzyme]-L-cysteine + [acceptor protein]-L-lysine = [E2 ubiquitin-conjugating enzyme]-L-cysteine + N(6)-ubiquitinyl-[acceptor protein]-L-lysine.. Its pathway is protein modification; protein ubiquitination. Functionally, E3 ubiquitin-protein ligase that plays a key role in the ribosome quality control (RQC), a pathway that takes place when a ribosome has stalled during translation, leading to degradation of nascent peptide chains. ZNF598 is activated when ribosomes are stalled within an mRNA following translation of prematurely polyadenylated mRNAs. Acts as a ribosome collision sensor: specifically recognizes and binds collided di-ribosome, which arises when a trailing ribosome encounters a slower leading ribosome, leading to terminally arrest translation. Following binding to colliding ribosomes, mediates monoubiquitination of 40S ribosomal proteins RPS10/eS10 and RPS3/uS3, and 'Lys-63'-linked polyubiquitination of RPS20/uS10. Polyubiquitination of RPS20/uS10 promotes recruitment of the RQT (ribosome quality control trigger) complex, which drives the disassembly of stalled ribosomes, followed by degradation of nascent peptides. The chain is E3 ubiquitin-protein ligase ZNF598 from Danio rerio (Zebrafish).